The following is a 599-amino-acid chain: MGVGGNFWDLLRPYAQQQGFDFLRNKRVAVDLSFWIVQHETAVKGFVLKPHLRLTFFRTINLFSKFGAYPVFVVDGTPSPLKSQARISRFFRSSGIDTCNLPVIKDGVSVERNKLFSEWVRECVELLELLGIPVLKANGEAEALCAQLNSQGFVDACITPDSDAFLFGAMCVIKDIKPNSREPFECYHMSHIESGLGLKRKHLIAISLLVGNDYDSGGVLGIGVDKALRIVREFSEDQVLERLQDIGNGLQPAVPGGIKSGDDGEEFRSEMKKRSPHCSRCGHLGSKRTHFKSSCEHCGCDSGCIKKPLGFRCECSFCSKDRDLREQKKTNDWWIKVCDKIALAPEFPNRKIIELYLSDGLMTGDGSSMSWGTPDTGMLVDLMVFKLHWDPSYVRKMLLPMLSTIYLREKARNNTGYALLCDQYEFHSIKCIKTRYGHQSFVIRWRKPKSTSGYSHSHSEPEESIVVLEEEEESVDPLDGLNEPQVQNDNGDCFLLTDECIGLVQSAFPDETEHFLHEKKLRESKKKNVSEEETATPRATTMGVQRSITDFYRSAKKAAAGQSIETGGSSKASAEKKRQATSTSSSNLTKSVRRRLLFG.

Residues 1-96 form an N-domain region; the sequence is MGVGGNFWDL…ISRFFRSSGI (96 aa). The tract at residues 2–95 is XPG-N domain; that stretch reads GVGGNFWDLL…RISRFFRSSG (94 aa). 7 residues coordinate Mg(2+): aspartate 31, aspartate 75, glutamate 140, glutamate 142, aspartate 161, aspartate 163, and aspartate 213. An XPG-I domain region spans residues 128 to 213; sequence ELLGIPVLKA…IAISLLVGND (86 aa). The segment at 128 to 217 is I-domain; sequence ELLGIPVLKA…LLVGNDYDSG (90 aa). Residues 213–407 form a 5'-3' exonuclease domain region; it reads DYDSGGVLGI…LLPMLSTIYL (195 aa). Disordered regions lie at residues 522-545 and 559-599; these read RESKKKNVSEEETATPRATTMGVQ and AAGQ…LLFG. Polar residues-rich tracts occupy residues 563-572 and 580-590; these read SIETGGSSKA and ATSTSSSNLTK.

This sequence belongs to the XPG/RAD2 endonuclease family. GEN subfamily. It depends on Mg(2+) as a cofactor.

The protein resides in the nucleus. In terms of biological role, endonuclease which cleaves flap structures at the junction between single-stranded DNA and double-stranded DNA with a specific cleavage site in the 5' overhang strand exactly one nucleotide 3' of the branch point. Structure- and sequence-specific nuclease that resolves holliday junctions (HJs) by symmetrically oriented incisions in two opposing strands near the junction point, thus leading to ligatable products; HJs are physical links between homologous DNA molecules that arise as central intermediary structures during homologous recombination and repair in meiotic and somatic cells. Structure-specific nuclease with 5'-flap endonuclease activity, preferentially cleaving static flaps 5' overhang strand exactly one nucleotide in the 3' direction of the branch point. Also able to cleave double-stranded flap strand 1 exactly at the branch point. The chain is Flap endonuclease GEN-like 1 from Arabidopsis thaliana (Mouse-ear cress).